Consider the following 433-residue polypeptide: Dihydrolipoyllysine-residue acetyltransferase component of pyruvate dehydrogenase complex (433 aa).

A Lipoyl-binding domain is found at 2 to 77 (AFEFRLPDIG…VVGDVIVKID (76 aa)). Position 43 is an N6-lipoyllysine (Lys-43). Disordered stretches follow at residues 80 to 134 (DAEE…PSVR) and 164 to 204 (YLNG…FPET). 2 stretches are compositionally biased toward basic and acidic residues: residues 84–103 (MQFK…KEQE) and 117–126 (EKTEVDESKT). Residues 128–165 (KAMPSVRKYARENGVNIKAVNGSGKNGRITKEDIDAYL) enclose the Peripheral subunit-binding (PSBD) domain. Residues 166–188 (NGGSSEEGSNTSVASESTSSDVV) show a composition bias toward low complexity. Residue His-404 is part of the active site.

Belongs to the 2-oxoacid dehydrogenase family. In terms of assembly, forms a 24-polypeptide structural core with octahedral symmetry. The cofactor is (R)-lipoate.

The enzyme catalyses N(6)-[(R)-dihydrolipoyl]-L-lysyl-[protein] + acetyl-CoA = N(6)-[(R)-S(8)-acetyldihydrolipoyl]-L-lysyl-[protein] + CoA. In terms of biological role, the pyruvate dehydrogenase complex catalyzes the overall conversion of pyruvate to acetyl-CoA and CO(2). It contains multiple copies of three enzymatic components: pyruvate dehydrogenase (E1), dihydrolipoamide acetyltransferase (E2) and lipoamide dehydrogenase (E3). The protein is Dihydrolipoyllysine-residue acetyltransferase component of pyruvate dehydrogenase complex (pdhC) of Staphylococcus epidermidis (strain ATCC 12228 / FDA PCI 1200).